Consider the following 281-residue polypeptide: Histidine biosynthesis bifunctional protein hisIE, chloroplastic (281 aa).

The N-terminal 50 residues, methionine 1–alanine 50, are a transit peptide targeting the chloroplast. Residues lysine 51–serine 178 form a phosphoribosyl-AMP cyclohydrolase region. The segment at leucine 179–lysine 281 is phosphoribosyl-ATP pyrophosphohydrolase.

It in the N-terminal section; belongs to the PRA-CH family. This sequence in the C-terminal section; belongs to the PRA-PH family. In terms of tissue distribution, ubiquitously expressed throughout development.

The protein localises to the plastid. It is found in the chloroplast. It catalyses the reaction 1-(5-phospho-beta-D-ribosyl)-ATP + H2O = 1-(5-phospho-beta-D-ribosyl)-5'-AMP + diphosphate + H(+). It carries out the reaction 1-(5-phospho-beta-D-ribosyl)-5'-AMP + H2O = 1-(5-phospho-beta-D-ribosyl)-5-[(5-phospho-beta-D-ribosylamino)methylideneamino]imidazole-4-carboxamide. It functions in the pathway amino-acid biosynthesis; L-histidine biosynthesis; L-histidine from 5-phospho-alpha-D-ribose 1-diphosphate: step 2/9. The protein operates within amino-acid biosynthesis; L-histidine biosynthesis; L-histidine from 5-phospho-alpha-D-ribose 1-diphosphate: step 3/9. The polypeptide is Histidine biosynthesis bifunctional protein hisIE, chloroplastic (HISN2) (Arabidopsis thaliana (Mouse-ear cress)).